The sequence spans 30 residues: Neurotoxin II.22.5 (30 aa).

An LCN-type CS-alpha/beta domain is found at 1–30 (KEGYIVNYHTGCKYTCAKLGDNDYCLRECK).

The protein belongs to the long (4 C-C) scorpion toxin superfamily. Sodium channel inhibitor family. Beta subfamily. As to expression, expressed by the venom gland.

The protein localises to the secreted. Binds to sodium channels (Nav) and inhibits the inactivation of the activated channels, thereby blocking neuronal transmission. The protein is Neurotoxin II.22.5 of Centruroides tecomanus (Scorpion).